Here is a 337-residue protein sequence, read N- to C-terminus: Probable uridine nucleosidase 2 (337 aa).

H260 is an active-site residue.

The protein belongs to the IUNH family.

The protein localises to the cytoplasm. The catalysed reaction is uridine + H2O = D-ribose + uracil. Involved in pyrimidine breakdown. In Oryza sativa subsp. japonica (Rice), this protein is Probable uridine nucleosidase 2 (URH2).